The primary structure comprises 362 residues: Carbamoyl phosphate synthase small chain (362 aa).

The CPSase stretch occupies residues 1–172 (MKAFLVLDNG…SKYIFGTHTG (172 aa)). L-glutamine is bound by residues Ser-45, Gly-224, and Gly-226. In terms of domain architecture, Glutamine amidotransferase type-1 spans 176–362 (KLAVYDYGVK…YDLVEKTKKG (187 aa)). Catalysis depends on Cys-252, which acts as the Nucleophile. Positions 253, 256, 294, 296, and 297 each coordinate L-glutamine. Active-site residues include His-335 and Glu-337.

It belongs to the CarA family. Composed of two chains; the small (or glutamine) chain promotes the hydrolysis of glutamine to ammonia, which is used by the large (or ammonia) chain to synthesize carbamoyl phosphate. Tetramer of heterodimers (alpha,beta)4.

It carries out the reaction hydrogencarbonate + L-glutamine + 2 ATP + H2O = carbamoyl phosphate + L-glutamate + 2 ADP + phosphate + 2 H(+). The enzyme catalyses L-glutamine + H2O = L-glutamate + NH4(+). Its pathway is amino-acid biosynthesis; L-arginine biosynthesis; carbamoyl phosphate from bicarbonate: step 1/1. It functions in the pathway pyrimidine metabolism; UMP biosynthesis via de novo pathway; (S)-dihydroorotate from bicarbonate: step 1/3. Small subunit of the glutamine-dependent carbamoyl phosphate synthetase (CPSase). CPSase catalyzes the formation of carbamoyl phosphate from the ammonia moiety of glutamine, carbonate, and phosphate donated by ATP, constituting the first step of 2 biosynthetic pathways, one leading to arginine and/or urea and the other to pyrimidine nucleotides. The small subunit (glutamine amidotransferase) binds and cleaves glutamine to supply the large subunit with the substrate ammonia. The protein is Carbamoyl phosphate synthase small chain of Leptospira interrogans serogroup Icterohaemorrhagiae serovar Lai (strain 56601).